The chain runs to 516 residues: 3-ketoacyl-CoA synthase 4 (516 aa).

2 helical membrane-spanning segments follow: residues 48-68 (LISN…SVEA) and 87-107 (LVSI…YVMT). An FAE domain is found at 104 to 393 (YVMTRPRPVY…FFMTLVVKKL (290 aa)). Active-site residues include cysteine 248, histidine 327, histidine 411, histidine 415, histidine 444, and asparagine 448.

It belongs to the thiolase-like superfamily. Chalcone/stilbene synthases family. Expressed at low levels in siliques, flowers, leaves and stems.

The protein localises to the membrane. It catalyses the reaction a very-long-chain acyl-CoA + malonyl-CoA + H(+) = a very-long-chain 3-oxoacyl-CoA + CO2 + CoA. It participates in lipid metabolism; fatty acid biosynthesis. In Arabidopsis thaliana (Mouse-ear cress), this protein is 3-ketoacyl-CoA synthase 4.